We begin with the raw amino-acid sequence, 149 residues long: Large ribosomal subunit protein bL9 (149 aa).

The protein belongs to the bacterial ribosomal protein bL9 family.

In terms of biological role, binds to the 23S rRNA. The sequence is that of Large ribosomal subunit protein bL9 from Vibrio cholerae serotype O1 (strain ATCC 39541 / Classical Ogawa 395 / O395).